The sequence spans 162 residues: NADH-quinone oxidoreductase subunit I (162 aa).

4Fe-4S ferredoxin-type domains lie at 52–82 (LRRY…IEAG) and 93–122 (VRYD…EGPN). Positions 62, 65, 68, 72, 102, 105, 108, and 112 each coordinate [4Fe-4S] cluster.

It belongs to the complex I 23 kDa subunit family. In terms of assembly, NDH-1 is composed of 14 different subunits. Subunits NuoA, H, J, K, L, M, N constitute the membrane sector of the complex. [4Fe-4S] cluster serves as cofactor.

The protein resides in the cell inner membrane. The enzyme catalyses a quinone + NADH + 5 H(+)(in) = a quinol + NAD(+) + 4 H(+)(out). Its function is as follows. NDH-1 shuttles electrons from NADH, via FMN and iron-sulfur (Fe-S) centers, to quinones in the respiratory chain. The immediate electron acceptor for the enzyme in this species is believed to be ubiquinone. Couples the redox reaction to proton translocation (for every two electrons transferred, four hydrogen ions are translocated across the cytoplasmic membrane), and thus conserves the redox energy in a proton gradient. The polypeptide is NADH-quinone oxidoreductase subunit I (Bradyrhizobium sp. (strain BTAi1 / ATCC BAA-1182)).